The chain runs to 256 residues: Imidazole glycerol phosphate synthase subunit HisF (256 aa).

Catalysis depends on residues Asp-12 and Asp-131.

It belongs to the HisA/HisF family. As to quaternary structure, heterodimer of HisH and HisF.

It localises to the cytoplasm. The enzyme catalyses 5-[(5-phospho-1-deoxy-D-ribulos-1-ylimino)methylamino]-1-(5-phospho-beta-D-ribosyl)imidazole-4-carboxamide + L-glutamine = D-erythro-1-(imidazol-4-yl)glycerol 3-phosphate + 5-amino-1-(5-phospho-beta-D-ribosyl)imidazole-4-carboxamide + L-glutamate + H(+). It participates in amino-acid biosynthesis; L-histidine biosynthesis; L-histidine from 5-phospho-alpha-D-ribose 1-diphosphate: step 5/9. Functionally, IGPS catalyzes the conversion of PRFAR and glutamine to IGP, AICAR and glutamate. The HisF subunit catalyzes the cyclization activity that produces IGP and AICAR from PRFAR using the ammonia provided by the HisH subunit. The chain is Imidazole glycerol phosphate synthase subunit HisF from Pseudomonas putida (strain GB-1).